Reading from the N-terminus, the 764-residue chain is Ribosomal protein S6 kinase alpha-6 (764 aa).

The tract at residues 1 to 24 (MLPFAPVEDPWDQEDMEVFGSTSS) is disordered. In terms of domain architecture, Protein kinase 1 spans 93–350 (FDLLKVLGQG…VEEVKRHAFF (258 aa)). ATP contacts are provided by residues 99-107 (LGQGSFGKV) and K125. D218 functions as the Proton acceptor in the catalytic mechanism. S252, S392, and S409 each carry phosphoserine. The AGC-kinase C-terminal domain maps to 351–420 (ASIDWNKLYK…VATSIAEEYK (70 aa)). One can recognise a Protein kinase 2 domain in the interval 446–706 (YELKEDIGIG…VLKHPWITQR (261 aa)). ATP-binding positions include 452–460 (IGIGSYSVC) and K475. D563 functions as the Proton acceptor in the catalytic mechanism. Phosphothreonine is present on T601.

It belongs to the protein kinase superfamily. AGC Ser/Thr protein kinase family. S6 kinase subfamily. In terms of assembly, forms a complex with MAPK3/ERK1 but not with MAPK9 or MAPK14 in serum-starved cells. Mg(2+) is required as a cofactor. Post-translationally, phosphorylated at Ser-252, Ser-392, and Ser-409 in serum-starved cells.

The protein resides in the cytoplasm. The protein localises to the cytosol. It localises to the nucleus. The enzyme catalyses L-seryl-[protein] + ATP = O-phospho-L-seryl-[protein] + ADP + H(+). It carries out the reaction L-threonyl-[protein] + ATP = O-phospho-L-threonyl-[protein] + ADP + H(+). Its activity is regulated as follows. Constitutively activated by phosphorylation at Ser-252, Ser-392, and Ser-409 in serum-starved cells. Does not require growth factor stimulation for significant kinase activity. Functionally, constitutively active serine/threonine-protein kinase that exhibits growth-factor-independent kinase activity and that may participate in p53/TP53-dependent cell growth arrest signaling and play an inhibitory role during embryogenesis. The chain is Ribosomal protein S6 kinase alpha-6 (Rps6ka6) from Mus musculus (Mouse).